The chain runs to 212 residues: Glutathione S-transferase P 1 (212 aa).

The 82-residue stretch at 2–83 folds into the GST N-terminal domain; sequence PGYVLTYFPV…YLGNKHGLTG (82 aa). Residues Tyr-8, Arg-14, Trp-39, Lys-47, 54-55, and 67-68 contribute to the glutathione site; these read QL and QS. The region spanning 85–206 is the GST C-terminal domain; that stretch reads NDEERGHIDM…KSDARNKRPI (122 aa).

Belongs to the GST superfamily. Pi family. Homodimer. Expressed only in embryos. Not expressed in liver, lung, heart, kidney and ovary.

It localises to the cytoplasm. The protein localises to the mitochondrion. Its subcellular location is the nucleus. It catalyses the reaction RX + glutathione = an S-substituted glutathione + a halide anion + H(+). Functionally, conjugation of reduced glutathione to a wide number of exogenous and endogenous hydrophobic electrophiles. Highly active towards 1-chloro-2,4-dinitrobenzene and organic isothiocyanates, but shows no detectable activity towards 1,2-dichloro-4-nitrobenzene, p-nitrobenzylchloride, trans-4-phenyl-3-buten-2-one (tPBO) and ethacrynic acid. May be associated with cellular proliferation. The polypeptide is Glutathione S-transferase P 1 (gstp1) (Xenopus laevis (African clawed frog)).